Here is a 293-residue protein sequence, read N- to C-terminus: Ribosomal protein L11 methyltransferase (293 aa).

S-adenosyl-L-methionine-binding residues include T145, G166, D188, and N230.

The protein belongs to the methyltransferase superfamily. PrmA family.

It is found in the cytoplasm. The catalysed reaction is L-lysyl-[protein] + 3 S-adenosyl-L-methionine = N(6),N(6),N(6)-trimethyl-L-lysyl-[protein] + 3 S-adenosyl-L-homocysteine + 3 H(+). Functionally, methylates ribosomal protein L11. The protein is Ribosomal protein L11 methyltransferase of Enterobacter sp. (strain 638).